The following is a 686-amino-acid chain: MAKNEDLILTIDSDAEYDNISESSEEEAEEAVSVKSKKKNNNNNNNKKSKAGKHGKANLEEAEAEEDDDEARGEMNLDFQFSLGDDLNEIKDWEVEEPAKDIDLNEIIKKKRESKKDGNGDDEEDDGDEDEDASESEEDDEKEELKAAGKNGQAGDDDEDENEDEDEEEEVDTKEDLDNFYESQETNTSASALKSKTFQELQLSRPILKSLQQLGFTVPTPVQASTIPIALLGKDIVASAQTGSGKTAAYLIPIIERLLYVKNSTSTKAIILTPTRELAIQVHDVGRKLGQFVSNLNFGMAVGGLSLKQQEQQLKTRPDIVIATPGRLIDHIRNSPSFSVEDVQVLIIDEADRMLEEGFQEELTEILSLIPKQKRQTLLFSATMNNTKIQDLVQLSLNKPIKVSIDPPRTVASKLEQQFVRIRKREELKPAVLYLLLKKLEGRTVVFTRTKVEAHKLRIILGLLGLTVAELHGALTQEQRLANVKAFKNNVNVLICTDLAARGLDIRIEYVINYDMPKTYEIYTHRVGRTARAGRKGTSISFVGESMQDRNIVKNAIQFNSRSVARKIDWDEVEKIQTKIKLNEGAIEEVIEEEKQAREIMRAEMQLNKAENLMKYEKEIKSRPKRTWFKSEVMEHLTKHGKKVNAKKRKANEERKEEGKERSYKKTKADRTKLKTKAKSSSKKRK.

Residues 17-30 (YDNISESSEEEAEE) are compositionally biased toward acidic residues. 2 disordered regions span residues 17 to 77 (YDNI…EMNL) and 94 to 192 (EVEE…SASA). Residues 47–56 (KKSKAGKHGK) are compositionally biased toward basic residues. The span at 60–71 (EEAEAEEDDDEA) shows a compositional bias: acidic residues. The segment covering 94–119 (EVEEPAKDIDLNEIIKKKRESKKDGN) has biased composition (basic and acidic residues). 2 stretches are compositionally biased toward acidic residues: residues 120–142 (GDDEEDDGDEDEDASESEEDDEK) and 155–179 (GDDDEDENEDEDEEEEVDTKEDLDN). A compositionally biased stretch (polar residues) spans 181–192 (YESQETNTSASA). Residues 196–224 (KTFQELQLSRPILKSLQQLGFTVPTPVQA) carry the Q motif motif. The Helicase ATP-binding domain occupies 227–402 (IPIALLGKDI…VQLSLNKPIK (176 aa)). 240 to 247 (AQTGSGKT) provides a ligand contact to ATP. Residues 349 to 352 (DEAD) carry the DEAD box motif. One can recognise a Helicase C-terminal domain in the interval 414-581 (KLEQQFVRIR…EVEKIQTKIK (168 aa)). A coiled-coil region spans residues 586–666 (AIEEVIEEEK…EEGKERSYKK (81 aa)). The segment at 638–686 (TKHGKKVNAKKRKANEERKEEGKERSYKKTKADRTKLKTKAKSSSKKRK) is disordered. Residues 639 to 650 (KHGKKVNAKKRK) show a composition bias toward basic residues. Residues 651 to 673 (ANEERKEEGKERSYKKTKADRTK) show a composition bias toward basic and acidic residues. Residues 674 to 686 (LKTKAKSSSKKRK) are compositionally biased toward basic residues.

It belongs to the DEAD box helicase family. DDX27/DRS1 subfamily. In terms of assembly, associates with pre-ribosomal particles.

Its subcellular location is the nucleus. It is found in the nucleolus. It catalyses the reaction ATP + H2O = ADP + phosphate + H(+). Its function is as follows. ATP-binding RNA helicase involved in ribosome assembly. The protein is ATP-dependent RNA helicase DRS1 (DRS1) of Lodderomyces elongisporus (strain ATCC 11503 / CBS 2605 / JCM 1781 / NBRC 1676 / NRRL YB-4239) (Yeast).